A 188-amino-acid polypeptide reads, in one-letter code: Elongation factor P-like protein (188 aa).

The protein belongs to the elongation factor P family.

The sequence is that of Elongation factor P-like protein from Stenotrophomonas maltophilia (strain R551-3).